A 206-amino-acid chain; its full sequence is Large ribosomal subunit protein uL4 (206 aa).

This sequence belongs to the universal ribosomal protein uL4 family. In terms of assembly, part of the 50S ribosomal subunit.

One of the primary rRNA binding proteins, this protein initially binds near the 5'-end of the 23S rRNA. It is important during the early stages of 50S assembly. It makes multiple contacts with different domains of the 23S rRNA in the assembled 50S subunit and ribosome. Its function is as follows. Forms part of the polypeptide exit tunnel. The sequence is that of Large ribosomal subunit protein uL4 from Methylorubrum extorquens (strain CM4 / NCIMB 13688) (Methylobacterium extorquens).